Consider the following 935-residue polypeptide: Lon protease homolog 2, peroxisomal (935 aa).

The Lon N-terminal domain maps to 12–296; sequence LPVHRLERNL…NLRRLVEEMG (285 aa). 452 to 459 serves as a coordination point for ATP; that stretch reads GPPGVGKT. Residues 692-922 form the Lon proteolytic domain; that stretch reads QKGYGVVNGL…SDVLASVWEG (231 aa). Active-site residues include Ser789 and Lys832. Positions 933 to 935 match the Microbody targeting signal motif; that stretch reads ARI.

Belongs to the peptidase S16 family.

Its subcellular location is the peroxisome matrix. The enzyme catalyses Hydrolysis of proteins in presence of ATP.. In terms of biological role, ATP-dependent serine protease that mediates the selective degradation of misfolded and unassembled polypeptides in the peroxisomal matrix. Necessary for type 2 peroxisome targeting signal (PTS2)-containing protein processing and facilitates peroxisome matrix protein import. The polypeptide is Lon protease homolog 2, peroxisomal (PLN) (Pichia angusta (Yeast)).